A 138-amino-acid chain; its full sequence is Protein PsiE homolog (138 aa).

4 helical membrane-spanning segments follow: residues 14–34, 56–76, 84–104, and 109–129; these read LQAL…GLLI, YEML…ALII, HFPL…LIII, and AIST…FFIV.

Belongs to the PsiE family.

It is found in the cell membrane. The chain is Protein PsiE homolog from Bacillus velezensis (strain DSM 23117 / BGSC 10A6 / LMG 26770 / FZB42) (Bacillus amyloliquefaciens subsp. plantarum).